A 279-amino-acid polypeptide reads, in one-letter code: Very long chain fatty acid elongase 2 (279 aa).

The next 7 membrane-spanning stretches (helical) occupy residues 12–32 (WFLL…LLSI), 50–70 (ILTL…VELV), 98–118 (VLWW…FFVL), 136–156 (MFNI…FFGP), 158–178 (LNSF…FPSM), 188–208 (LTQA…SAVV), and 213–233 (FPFG…ILFL). Positions 276-279 (KKVQ) match the Di-lysine motif motif.

It belongs to the ELO family. ELOVL2 subfamily. Interacts with TECR.

The protein localises to the endoplasmic reticulum membrane. The catalysed reaction is a very-long-chain acyl-CoA + malonyl-CoA + H(+) = a very-long-chain 3-oxoacyl-CoA + CO2 + CoA. It catalyses the reaction (7Z,10Z,13Z,16Z,19Z)-docosapentaenoyl-CoA + malonyl-CoA + H(+) = (9Z,12Z,15Z,18Z,21Z)-3-oxotetracosapentaenoyl-CoA + CO2 + CoA. The enzyme catalyses (5Z,8Z,11Z,14Z,17Z)-eicosapentaenoyl-CoA + malonyl-CoA + H(+) = 3-oxo-(7Z,10Z,13Z,16Z,19Z)-docosapentaenoyl-CoA + CO2 + CoA. It carries out the reaction (5Z,8Z,11Z,14Z)-eicosatetraenoyl-CoA + malonyl-CoA + H(+) = (7Z,10Z,13Z,16Z)-3-oxodocosatetraenoyl-CoA + CO2 + CoA. The catalysed reaction is (7Z,10Z,13Z,16Z)-docosatetraenoyl-CoA + malonyl-CoA + H(+) = (9Z,12Z,15Z,18Z)-3-oxotetracosatetraenoyl-CoA + CO2 + CoA. It functions in the pathway lipid metabolism; polyunsaturated fatty acid biosynthesis. In terms of biological role, catalyzes the first and rate-limiting reaction of the four reactions that constitute the long-chain fatty acids elongation cycle. This endoplasmic reticulum-bound enzymatic process allows the addition of 2 carbons to the chain of long- and very long-chain fatty acids (VLCFAs) per cycle. Condensing enzyme that catalyzes the synthesis of polyunsaturated very long chain fatty acid (C20- and C22-PUFA), acting specifically toward polyunsaturated acyl-CoA with the higher activity toward C20:4(n-6) acyl-CoA. May participate in the production of polyunsaturated VLCFAs of different chain lengths that are involved in multiple biological processes as precursors of membrane lipids and lipid mediators. The sequence is that of Very long chain fatty acid elongase 2 from Rattus norvegicus (Rat).